Consider the following 295-residue polypeptide: N-acetylmuramic acid 6-phosphate etherase (295 aa).

Residues alanine 55 to lysine 218 enclose the SIS domain. The active-site Proton donor is the glutamate 83. Glutamate 114 is a catalytic residue.

This sequence belongs to the GCKR-like family. MurNAc-6-P etherase subfamily. Homodimer.

It carries out the reaction N-acetyl-D-muramate 6-phosphate + H2O = N-acetyl-D-glucosamine 6-phosphate + (R)-lactate. The protein operates within amino-sugar metabolism; 1,6-anhydro-N-acetylmuramate degradation. Its pathway is amino-sugar metabolism; N-acetylmuramate degradation. It functions in the pathway cell wall biogenesis; peptidoglycan recycling. Its function is as follows. Specifically catalyzes the cleavage of the D-lactyl ether substituent of MurNAc 6-phosphate, producing GlcNAc 6-phosphate and D-lactate. Together with AnmK, is also required for the utilization of anhydro-N-acetylmuramic acid (anhMurNAc) either imported from the medium or derived from its own cell wall murein, and thus plays a role in cell wall recycling. The sequence is that of N-acetylmuramic acid 6-phosphate etherase from Yersinia pseudotuberculosis serotype O:1b (strain IP 31758).